An 85-amino-acid chain; its full sequence is Small ribosomal subunit protein uS17 (85 aa).

It belongs to the universal ribosomal protein uS17 family. Part of the 30S ribosomal subunit.

Functionally, one of the primary rRNA binding proteins, it binds specifically to the 5'-end of 16S ribosomal RNA. The sequence is that of Small ribosomal subunit protein uS17 from Actinobacillus succinogenes (strain ATCC 55618 / DSM 22257 / CCUG 43843 / 130Z).